The following is a 312-amino-acid chain: Ribonuclease Z (312 aa).

The Zn(2+) site is built by histidine 63, histidine 65, aspartate 67, histidine 68, histidine 140, aspartate 211, and histidine 269. The active-site Proton acceptor is the aspartate 67.

It belongs to the RNase Z family. As to quaternary structure, homodimer. The cofactor is Zn(2+).

It catalyses the reaction Endonucleolytic cleavage of RNA, removing extra 3' nucleotides from tRNA precursor, generating 3' termini of tRNAs. A 3'-hydroxy group is left at the tRNA terminus and a 5'-phosphoryl group is left at the trailer molecule.. In terms of biological role, zinc phosphodiesterase, which displays some tRNA 3'-processing endonuclease activity. Probably involved in tRNA maturation, by removing a 3'-trailer from precursor tRNA. This Shouchella clausii (strain KSM-K16) (Alkalihalobacillus clausii) protein is Ribonuclease Z.